Here is a 278-residue protein sequence, read N- to C-terminus: Probable ribosomal RNA small subunit methyltransferase A (278 aa).

Positions 25, 27, 52, 73, 98, and 114 each coordinate S-adenosyl-L-methionine.

This sequence belongs to the class I-like SAM-binding methyltransferase superfamily. rRNA adenine N(6)-methyltransferase family. RsmA subfamily.

The protein localises to the cytoplasm. Functionally, specifically dimethylates two adjacent adenosines in the loop of a conserved hairpin near the 3'-end of 16S rRNA in the 30S particle. May play a critical role in biogenesis of 30S subunits. This is Probable ribosomal RNA small subunit methyltransferase A from Methanopyrus kandleri (strain AV19 / DSM 6324 / JCM 9639 / NBRC 100938).